The sequence spans 301 residues: uncharacterized protein (301 aa).

Positions 1 to 58 (MDIRHLTYFLEVARLKSFTKASQSLYVSQPTISKMIKNLEEELGIELFYRNGRQVELT) constitute an HTH lysR-type domain. Positions 18-37 (FTKASQSLYVSQPTISKMIK) form a DNA-binding region, H-T-H motif.

Belongs to the LysR transcriptional regulatory family.

This is an uncharacterized protein from Bacillus subtilis (strain 168).